We begin with the raw amino-acid sequence, 309 residues long: Syndecan-1 (309 aa).

The N-terminal stretch at 1–22 (MRRAALWLWLCALALRLQPVLP) is a signal peptide. The Extracellular segment spans residues 24–253 (IMAVNVPPED…GLLDRKEVLG (230 aa)). Disordered regions lie at residues 28–57 (NVPP…DITL) and 142–185 (ARAT…GGTS). Over residues 32-42 (EDQDGSGDDSD) the composition is skewed to acidic residues. O-linked (Xyl...) (chondroitin sulfate) serine glycosylation occurs at Ser37. Asn43 carries an N-linked (GlcNAc...) asparagine glycan. O-linked (Xyl...) (heparan sulfate) serine glycans are attached at residues Ser45 and Ser47. Polar residues predominate over residues 142 to 151 (ARATTAQAPV). O-linked (Xyl...) (chondroitin sulfate) serine glycosylation is found at Ser205 and Ser215. A helical membrane pass occupies residues 254–274 (GVIAGGLVGLIFAVCLVGFML). Topologically, residues 275-309 (YRMKKKDEGSYSLEEPKQANGGAYQKPTKQEEFYA) are cytoplasmic. The segment at 283–309 (GSYSLEEPKQANGGAYQKPTKQEEFYA) is disordered. Ser284 carries the phosphoserine modification.

Belongs to the syndecan proteoglycan family. In terms of assembly, interacts with CDCP1. Interacts (via C-terminus) with TIAM1 (via PDZ domain). Interacts with MDK. In terms of processing, shedding is enhanced by a number of factors such as heparanase, thrombin or EGF. Also by stress and wound healing. PMA-mediated shedding is inhibited by TIMP3.

It is found in the membrane. It localises to the secreted. Its subcellular location is the extracellular exosome. Cell surface proteoglycan that contains both heparan sulfate and chondroitin sulfate and that links the cytoskeleton to the interstitial matrix. Regulates exosome biogenesis in concert with SDCBP and PDCD6IP. Able to induce its own expression in dental mesenchymal cells and also in the neighboring dental epithelial cells via an MSX1-mediated pathway. This Cricetulus griseus (Chinese hamster) protein is Syndecan-1.